A 217-amino-acid polypeptide reads, in one-letter code: Phosphatidylserine decarboxylase proenzyme (217 aa).

The active-site Schiff-base intermediate with substrate; via pyruvic acid is the Ser-183. Ser-183 carries the pyruvic acid (Ser); by autocatalysis modification.

Belongs to the phosphatidylserine decarboxylase family. PSD-A subfamily. Heterodimer of a large membrane-associated beta subunit and a small pyruvoyl-containing alpha subunit. It depends on pyruvate as a cofactor. Post-translationally, is synthesized initially as an inactive proenzyme. Formation of the active enzyme involves a self-maturation process in which the active site pyruvoyl group is generated from an internal serine residue via an autocatalytic post-translational modification. Two non-identical subunits are generated from the proenzyme in this reaction, and the pyruvate is formed at the N-terminus of the alpha chain, which is derived from the carboxyl end of the proenzyme. The post-translation cleavage follows an unusual pathway, termed non-hydrolytic serinolysis, in which the side chain hydroxyl group of the serine supplies its oxygen atom to form the C-terminus of the beta chain, while the remainder of the serine residue undergoes an oxidative deamination to produce ammonia and the pyruvoyl prosthetic group on the alpha chain.

It localises to the cell membrane. It catalyses the reaction a 1,2-diacyl-sn-glycero-3-phospho-L-serine + H(+) = a 1,2-diacyl-sn-glycero-3-phosphoethanolamine + CO2. Its pathway is phospholipid metabolism; phosphatidylethanolamine biosynthesis; phosphatidylethanolamine from CDP-diacylglycerol: step 2/2. In terms of biological role, catalyzes the formation of phosphatidylethanolamine (PtdEtn) from phosphatidylserine (PtdSer). This chain is Phosphatidylserine decarboxylase proenzyme, found in Cupriavidus pinatubonensis (strain JMP 134 / LMG 1197) (Cupriavidus necator (strain JMP 134)).